Reading from the N-terminus, the 324-residue chain is Lactonase drp35 (324 aa).

10 residues coordinate Ca(2+): Glu47, Ser109, Gly111, Asp129, Thr132, Tyr134, Asp137, Asn184, Asp235, and Ser236. Asp235 acts as the Proton donor in catalysis.

The protein belongs to the SMP-30/CGR1 family. It depends on Ca(2+) as a cofactor.

The protein resides in the cytoplasm. Functionally, exhibits lactonase activity. Acts in cells with perturbed membrane integrity and is possibly related to the membrane homeostasis. The protein is Lactonase drp35 (drp35) of Staphylococcus aureus (strain MW2).